A 473-amino-acid chain; its full sequence is GTPase Der (473 aa).

2 consecutive EngA-type G domains span residues 5-170 and 178-351; these read PVVA…PEDV and LKLA…ASSM. GTP-binding positions include 11–18, 58–62, 123–126, 184–191, 231–235, and 296–299; these read GRPNVGKS, DTGGI, NKID, DTAGV, and NKWD. One can recognise a KH-like domain in the interval 352 to 436; that stretch reads FKVSTNRLTQ…PLKVEFKLNT (85 aa). The interval 438–473 is disordered; it reads PYAGKKTTSSKKLRPGVSEARQKRRNMKYKKGSHKK. Residues 459–473 show a composition bias toward basic residues; the sequence is QKRRNMKYKKGSHKK.

The protein belongs to the TRAFAC class TrmE-Era-EngA-EngB-Septin-like GTPase superfamily. EngA (Der) GTPase family. Associates with the 50S ribosomal subunit.

Its function is as follows. GTPase that plays an essential role in the late steps of ribosome biogenesis. In Psychrobacter sp. (strain PRwf-1), this protein is GTPase Der.